The primary structure comprises 425 residues: Receptor-like protein 55 (425 aa).

A signal peptide spans 1–25; that stretch reads MKPQQPQPPLLLLLLLPLLLTTVSS. Residues 26–397 lie on the Extracellular side of the membrane; sequence YPLNPKQLKA…EEEHKGSNKT (372 aa). Residues asparagine 40, asparagine 54, asparagine 79, and asparagine 132 are each glycosylated (N-linked (GlcNAc...) asparagine). 7 LRR repeats span residues 144–169, 170–193, 195–216, 217–240, 242–264, 265–287, and 288–313; these read LKNL…ILGN, MHKL…SFHS, LRYI…ITRL, KNLK…IKSL, FLKN…LSSI, SELT…FFSE, and MKNL…SFIK. Asparagine 182, asparagine 202, asparagine 223, asparagine 245, asparagine 278, asparagine 308, and asparagine 329 each carry an N-linked (GlcNAc...) asparagine glycan. The interval 355-389 is disordered; sequence PSQKEESLSGENDYDVEGGNEEKTENLKTKEEEEE. Residues 374-389 show a composition bias toward basic and acidic residues; sequence NEEKTENLKTKEEEEE. An N-linked (GlcNAc...) asparagine glycan is attached at asparagine 395. The helical transmembrane segment at 398-418 threads the bilayer; it reads LFGLGIGLFSLVFLILFLFYL. Over 419–425 the chain is Cytoplasmic; sequence AKRCRLI.

Belongs to the RLP family.

It is found in the cell membrane. In terms of biological role, involved in plant defense. The protein is Receptor-like protein 55 of Arabidopsis thaliana (Mouse-ear cress).